The chain runs to 464 residues: Interstitial collagenase A (464 aa).

Residues 1 to 17 form the signal peptide; that stretch reads MPSLPLLLLLWAASSYS. Positions 18–96 are cleaved as a propeptide — activation peptide; it reads FPVFHNGDRQ…PRCGVPDVAP (79 aa). Residues 87–94 carry the Cysteine switch motif; sequence PRCGVPDV. Residue C89 coordinates Zn(2+). Residues 95–274 are metalloprotease; it reads APYAITHNNP…IQPTGATTPH (180 aa). Residue D155 coordinates Ca(2+). Positions 165 and 167 each coordinate Zn(2+). Residues D172 and G173 each coordinate Ca(2+). H180 is a binding site for Zn(2+). 3 residues coordinate Ca(2+): G187, G189, and D191. Residue H193 participates in Zn(2+) binding. Ca(2+) contacts are provided by D195 and E198. N202 carries an N-linked (GlcNAc...) asparagine glycan. A Zn(2+)-binding site is contributed by H215. The active site involves E216. Residues H219 and H225 each coordinate Zn(2+). Hemopexin repeat units follow at residues 273 to 322 and 323 to 369; these read PHPC…WPNL and PVKL…FGFP. Cysteines 276 and 464 form a disulfide. D283 contacts Ca(2+). A glycan (N-linked (GlcNAc...) asparagine) is linked at N371. Hemopexin repeat units follow at residues 372–420 and 421–464; these read VTHI…FPGI and DDKV…WFNC. D376 and D425 together coordinate Ca(2+).

Belongs to the peptidase M10A family. Requires Ca(2+) as cofactor. The cofactor is Zn(2+).

Its subcellular location is the secreted. The protein localises to the extracellular space. The protein resides in the extracellular matrix. The enzyme catalyses Cleavage of the triple helix of collagen at about three-quarters of the length of the molecule from the N-terminus, at 775-Gly-|-Ile-776 in the alpha1(I) chain. Cleaves synthetic substrates and alpha-macroglobulins at bonds where P1' is a hydrophobic residue.. With respect to regulation, can be activated without removal of the activation peptide. In terms of biological role, cleaves collagens of types I, II, and III at one site in the helical domain. Also cleaves collagens of types VII and X. Able to degrade synthetic peptides and type I and II fibrillar collagen. The chain is Interstitial collagenase A (Mmp1a) from Mus musculus (Mouse).